The primary structure comprises 855 residues: Pre-mRNA-splicing factor SYF1 (855 aa).

9 HAT repeats span residues 15 to 47, 48 to 80, 90 to 122, 124 to 158, 160 to 192, 198 to 230, 235 to 268, 270 to 305, and 369 to 407; these read LVFE…FKQG, APKP…ARRA, PAYE…FLMD, GRVT…FLRS, PLPE…SSDR, QRLA…LISQ, VQSL…YYIR, GHFE…FEES, and GRPR…FYED. Lys420 carries the N6-acetyllysine modification. HAT repeat units follow at residues 498 to 530, 532 to 566, 571 to 605, 643 to 677, and 679 to 713; these read GTFQ…FLEE, KYFE…KFIS, RKLE…LEEE, YGVT…MECK, and GEID…FEVR. The interval 808-855 is disordered; that stretch reads AELAQQANPEEIQLGEDEDEDEMDLEPNEVRLEQQSVPAAVFGSLKED. A compositionally biased stretch (acidic residues) spans 820–834; it reads QLGEDEDEDEMDLEP. The residue at position 851 (Ser851) is a Phosphoserine.

This sequence belongs to the crooked-neck family. As to quaternary structure, associates with RNA polymerase II, the TCR-specific proteins CKN1/CSA and ERCC6/CSB, and XPA. Identified in the spliceosome C complex. Component of the XAB2 complex, a multimeric protein complex composed of XAB2, PRPF19, AQR, ZNF830, ISY1, and PPIE. Identified in a pentameric intron-binding (IB) complex composed of AQR, XAB2, ISY1, ZNF830 and PPIE that is incorporated into the spliceosome as a preassembled complex. The IB complex does not contain PRPF19.

Its subcellular location is the nucleus. Functionally, involved in pre-mRNA splicing as component of the spliceosome. Involved in transcription-coupled repair (TCR), transcription and pre-mRNA splicing. This is Pre-mRNA-splicing factor SYF1 (Xab2) from Mus musculus (Mouse).